The chain runs to 336 residues: UDP-3-O-acylglucosamine N-acyltransferase (336 aa).

The active-site Proton acceptor is the H233.

This sequence belongs to the transferase hexapeptide repeat family. LpxD subfamily. Homotrimer.

It carries out the reaction a UDP-3-O-[(3R)-3-hydroxyacyl]-alpha-D-glucosamine + a (3R)-hydroxyacyl-[ACP] = a UDP-2-N,3-O-bis[(3R)-3-hydroxyacyl]-alpha-D-glucosamine + holo-[ACP] + H(+). The protein operates within bacterial outer membrane biogenesis; LPS lipid A biosynthesis. Functionally, catalyzes the N-acylation of UDP-3-O-acylglucosamine using 3-hydroxyacyl-ACP as the acyl donor. Is involved in the biosynthesis of lipid A, a phosphorylated glycolipid that anchors the lipopolysaccharide to the outer membrane of the cell. The sequence is that of UDP-3-O-acylglucosamine N-acyltransferase from Helicobacter pylori (strain J99 / ATCC 700824) (Campylobacter pylori J99).